The following is a 175-amino-acid chain: Large ribosomal subunit protein uL10 (175 aa).

It belongs to the universal ribosomal protein uL10 family. Part of the ribosomal stalk of the 50S ribosomal subunit. The N-terminus interacts with L11 and the large rRNA to form the base of the stalk. The C-terminus forms an elongated spine to which L12 dimers bind in a sequential fashion forming a multimeric L10(L12)X complex.

In terms of biological role, forms part of the ribosomal stalk, playing a central role in the interaction of the ribosome with GTP-bound translation factors. The sequence is that of Large ribosomal subunit protein uL10 from Synechococcus sp. (strain CC9311).